Reading from the N-terminus, the 245-residue chain is MIIPALDLIDGTVVRLHQGDYGKQRDYGNDPLPRLQDYAAQGAEVLHLVDLTGAKDPAKRQIPLIKTLVAGVNVPVQVGGGVRSEEDVAALLEAGVARVVVGSTAVKSPDVVKGWFERFGADALVLALDVRIDEQGNKQVAVSGWQENSGVSLEQLVETYLPVGLKHVLCTDISRDGTLAGSNVSLYEEVCARYPQVAFQSSGGIGDINDVAALRGTGVRGVIVGRALLEGKFTVKEAIACWQNA.

Residue Asp7 is the Proton acceptor of the active site. Asp129 acts as the Proton donor in catalysis.

It belongs to the HisA/HisF family.

Its subcellular location is the cytoplasm. It catalyses the reaction 1-(5-phospho-beta-D-ribosyl)-5-[(5-phospho-beta-D-ribosylamino)methylideneamino]imidazole-4-carboxamide = 5-[(5-phospho-1-deoxy-D-ribulos-1-ylimino)methylamino]-1-(5-phospho-beta-D-ribosyl)imidazole-4-carboxamide. Its pathway is amino-acid biosynthesis; L-histidine biosynthesis; L-histidine from 5-phospho-alpha-D-ribose 1-diphosphate: step 4/9. The polypeptide is 1-(5-phosphoribosyl)-5-[(5-phosphoribosylamino)methylideneamino] imidazole-4-carboxamide isomerase (Shigella flexneri serotype 5b (strain 8401)).